The sequence spans 190 residues: Dynactin subunit 6 (190 aa).

Thr-186 is modified (phosphothreonine; by CDK1).

This sequence belongs to the dynactin subunits 5/6 family. Dynactin subunit 6 subfamily. Subunit of dynactin, a multiprotein complex part of a tripartite complex with dynein and a adapter, such as BICDL1, BICD2 or HOOK3. The dynactin complex is built around ACTR1A/ACTB filament and consists of an actin-related filament composed of a shoulder domain, a pointed end and a barbed end. Its length is defined by its flexible shoulder domain. The soulder is composed of 2 DCTN1 subunits, 4 DCTN2 and 2 DCTN3. The 4 DCNT2 (via N-terminus) bind the ACTR1A filament and act as molecular rulers to determine the length. The pointed end is important for binding dynein-dynactin cargo adapters. Consists of 4 subunits: ACTR10, DCNT4, DCTN5 and DCTN6. Within the complex DCTN6 forms a heterodimer with DCTN5. The barbed end is composed of a CAPZA1:CAPZB heterodimers, which binds ACTR1A/ACTB filament and dynactin and stabilizes dynactin. Interacts with PLK1. Interacts with N4BP2L1. In terms of processing, phosphorylation at Thr-186 by CDK1 during mitotic prometaphase creates a binding site for PLK1 that facilitates its recruitment to kinetochores.

It is found in the cytoplasm. The protein localises to the cytoskeleton. It localises to the chromosome. The protein resides in the centromere. Its subcellular location is the kinetochore. Part of the dynactin complex that activates the molecular motor dynein for ultra-processive transport along microtubules. In Pongo abelii (Sumatran orangutan), this protein is Dynactin subunit 6 (DCTN6).